The chain runs to 285 residues: Bifunctional protein FolD (285 aa).

NADP(+)-binding positions include 166–168 (GAS) and Ile232.

The protein belongs to the tetrahydrofolate dehydrogenase/cyclohydrolase family. Homodimer.

It carries out the reaction (6R)-5,10-methylene-5,6,7,8-tetrahydrofolate + NADP(+) = (6R)-5,10-methenyltetrahydrofolate + NADPH. The enzyme catalyses (6R)-5,10-methenyltetrahydrofolate + H2O = (6R)-10-formyltetrahydrofolate + H(+). It functions in the pathway one-carbon metabolism; tetrahydrofolate interconversion. In terms of biological role, catalyzes the oxidation of 5,10-methylenetetrahydrofolate to 5,10-methenyltetrahydrofolate and then the hydrolysis of 5,10-methenyltetrahydrofolate to 10-formyltetrahydrofolate. The polypeptide is Bifunctional protein FolD (Vibrio atlanticus (strain LGP32) (Vibrio splendidus (strain Mel32))).